We begin with the raw amino-acid sequence, 365 residues long: Anthranilate phosphoribosyltransferase (365 aa).

5-phospho-alpha-D-ribose 1-diphosphate-binding positions include Gly96, 99–100 (GD), Thr104, 106–109 (NIST), 124–132 (KHGNRSVSS), and Ser136. Gly96 is a binding site for anthranilate. Ser108 serves as a coordination point for Mg(2+). Residue Asn127 participates in anthranilate binding. Arg182 serves as a coordination point for anthranilate. Residues Asp240 and Glu241 each coordinate Mg(2+).

The protein belongs to the anthranilate phosphoribosyltransferase family. As to quaternary structure, homodimer. Mg(2+) serves as cofactor.

The enzyme catalyses N-(5-phospho-beta-D-ribosyl)anthranilate + diphosphate = 5-phospho-alpha-D-ribose 1-diphosphate + anthranilate. It functions in the pathway amino-acid biosynthesis; L-tryptophan biosynthesis; L-tryptophan from chorismate: step 2/5. In terms of biological role, catalyzes the transfer of the phosphoribosyl group of 5-phosphorylribose-1-pyrophosphate (PRPP) to anthranilate to yield N-(5'-phosphoribosyl)-anthranilate (PRA). In Colwellia psychrerythraea (strain 34H / ATCC BAA-681) (Vibrio psychroerythus), this protein is Anthranilate phosphoribosyltransferase.